Here is a 99-residue protein sequence, read N- to C-terminus: C-C motif chemokine 17 (99 aa).

A signal peptide spans 1–23; it reads MMSLKLLLLVMLLLGASLQVTHA. Disulfide bonds link Cys33–Cys57 and Cys34–Cys73.

The protein belongs to the intercrine beta (chemokine CC) family. Expressed in thymus and also in spleen, lung, lymph node, kidney, small intestine, colon and skin.

It localises to the secreted. Functionally, chemokine, which displays chemotactic activity for T lymphocytes, preferentially Th2 cells, but not monocytes or granulocytes. Therefore plays an important role in a wide range of inflammatory and immunological processes. Acts by binding to CCR4 at T-cell surface. Mediates GM-CSF/CSF2-driven pain and inflammation. In the brain, required to maintain the typical, highly branched morphology of hippocampal microglia under homeostatic conditions. May be important for the appropriate adaptation of microglial morphology and synaptic plasticity to acute lipopolysaccharide (LPS)-induced neuroinflammation. Plays a role in wound healing, mainly by inducing fibroblast migration into the wound. This chain is C-C motif chemokine 17 (CCL17), found in Felis catus (Cat).